The sequence spans 305 residues: Putative ABC transporter molybdenum-binding protein HVO_B0369 (305 aa).

The tat-type signal signal peptide spans 1–40 (MNPDSAAGRSSRRAFLAAVGGVAAGGLTATAGCLGRGEEA).

It belongs to the bacterial solute-binding protein 1 family. WtpA subfamily. As to quaternary structure, the complex is composed of two ATP-binding proteins, two transmembrane proteins (HVO_B0370) and a solute-binding protein (HVO_B0369). Predicted to be exported by the Tat system. The position of the signal peptide cleavage has not been experimentally proven.

Part of an ABC transporter complex involved in molybdenum import. The polypeptide is Putative ABC transporter molybdenum-binding protein HVO_B0369 (Haloferax volcanii (strain ATCC 29605 / DSM 3757 / JCM 8879 / NBRC 14742 / NCIMB 2012 / VKM B-1768 / DS2) (Halobacterium volcanii)).